The chain runs to 194 residues: Myelin-associated neurite-outgrowth inhibitor (194 aa).

Methionine 1 carries the post-translational modification N-acetylmethionine. Residues 1 to 18 (MNPVYSPGSSGVPYANAK) are Cytoplasmic-facing. At serine 6 the chain carries Phosphoserine. A helical membrane pass occupies residues 19 to 41 (GIGYPAGFPVGYAAAPAYSPNMY). The Extracellular portion of the chain corresponds to 42 to 141 (PGANPTFQTG…PAPIPPPRGS (100 aa)). A glycan (N-linked (GlcNAc...) asparagine) is linked at asparagine 45. Residues 142–163 (GVTMGMVAGTTMAMSAGTLLTA) form a helical membrane-spanning segment. Residues 164 to 194 (HSPTPVAPHPVTVPTYRAPGTPTYSYVPPQW) are Cytoplasmic-facing.

It belongs to the FAM168 family. As to quaternary structure, may form homodimers. May interact with DAZAP2, FAM168A, PRDX6, RBM6, TMTC1 and YPEL2. Interacts with CDC27. N-glycosylated. As to expression, predominantly expressed in the brain, including olfactory bulb, cortex and cerebellum (at protein level).

It localises to the cytoplasm. The protein localises to the perinuclear region. The protein resides in the cell membrane. Its subcellular location is the cell projection. It is found in the axon. Its function is as follows. Inhibitor of neuronal axonal outgrowth. Acts as a negative regulator of CDC42 and STAT3 and a positive regulator of STMN2. Positive regulator of CDC27. The sequence is that of Myelin-associated neurite-outgrowth inhibitor (Fam168b) from Mus musculus (Mouse).